A 535-amino-acid polypeptide reads, in one-letter code: Protein PyrBI (535 aa).

Residues M1–Y341 form an aspartate carbamoyltransferase region. Residues K342–K370 are linker. The aspartate carbamoyltransferase regulatory region stretch occupies residues V371–N535. Zn(2+)-binding residues include C488, C493, C517, and C520.

The protein in the N-terminal section; belongs to the aspartate/ornithine carbamoyltransferase superfamily. ATCase family. This sequence in the C-terminal section; belongs to the PyrI family.

It catalyses the reaction carbamoyl phosphate + L-aspartate = N-carbamoyl-L-aspartate + phosphate + H(+). Its pathway is pyrimidine metabolism; UMP biosynthesis via de novo pathway; (S)-dihydroorotate from bicarbonate: step 2/3. This is Protein PyrBI (pyrBI) from Treponema denticola (strain ATCC 35405 / DSM 14222 / CIP 103919 / JCM 8153 / KCTC 15104).